The primary structure comprises 76 residues: Alpha/kappa-conotoxin-like fe14.2 (76 aa).

The N-terminal stretch at 1–24 (MPSVRSVTCCCLLWMMLSVQLVTP) is a signal peptide. Positions 25 to 39 (GSPGTAQLSGQRTAR) are excised as a propeptide. Cystine bridges form between cysteine 46–cysteine 61 and cysteine 50–cysteine 63. Arginine 64 is subject to Arginine amide. Residues 65 to 76 (GKRDVVSSSMAV) constitute a propeptide that is removed on maturation.

The protein belongs to the conotoxin J superfamily. As to expression, expressed by the venom duct.

It localises to the secreted. Its function is as follows. Highly inhibits both nicotinic acetylcholine receptors (neuronal (alpha-3/beta-4) and muscular (alpha-1/beta-1/epsilon/delta) subtypes) and the voltage-gated potassium channel Kv1.6/KCNA6 subtype. This chain is Alpha/kappa-conotoxin-like fe14.2, found in Conus ferrugineus (Cone snail).